Consider the following 163-residue polypeptide: Putative 4-hydroxy-4-methyl-2-oxoglutarate aldolase (163 aa).

Substrate contacts are provided by residues 76–79 and R98; that span reads GDML. Position 99 (D99) interacts with a divalent metal cation.

The protein belongs to the class II aldolase/RraA-like family. As to quaternary structure, homotrimer. A divalent metal cation serves as cofactor.

It carries out the reaction 4-hydroxy-4-methyl-2-oxoglutarate = 2 pyruvate. It catalyses the reaction oxaloacetate + H(+) = pyruvate + CO2. Functionally, catalyzes the aldol cleavage of 4-hydroxy-4-methyl-2-oxoglutarate (HMG) into 2 molecules of pyruvate. Also contains a secondary oxaloacetate (OAA) decarboxylase activity due to the common pyruvate enolate transition state formed following C-C bond cleavage in the retro-aldol and decarboxylation reactions. This is Putative 4-hydroxy-4-methyl-2-oxoglutarate aldolase from Pseudomonas putida (strain ATCC 47054 / DSM 6125 / CFBP 8728 / NCIMB 11950 / KT2440).